The sequence spans 61 residues: Photosystem II reaction center X protein (61 aa).

The chain crosses the membrane as a helical span at residues 26-46; sequence IGSFIAAALLIVIPATAFLIF.

It belongs to the PsbX family. Type 2 subfamily. In terms of assembly, PSII consists of a core antenna complex that captures photons, and an electron transfer chain that converts photonic excitation into a charge separation. PSII forms dimeric complexes.

It localises to the cellular thylakoid membrane. Functionally, involved in the binding and/or turnover of quinones at the Q(B) site of Photosystem II. This chain is Photosystem II reaction center X protein, found in Prochlorococcus marinus (strain MIT 9312).